The sequence spans 418 residues: Alditol oxidase (418 aa).

The region spanning 13–179 (ITYTAKELLR…TSLTLDLEPA (167 aa)) is the FAD-binding PCMH-type domain. FAD is bound by residues 41-47 (VLGSGHS), Ser-106, Ser-111, Gly-114, 118-121 (TGTH), and Val-169. The residue at position 46 (His-46) is a Pros-8alpha-FAD histidine. Ser-106 lines the D-sorbitol pocket. Xylitol is bound at residue Ser-106. D-sorbitol contacts are provided by Glu-320, Arg-322, and Thr-345. The xylitol site is built by Glu-320, Arg-322, and Thr-345. Arg-322 serves as a coordination point for FAD. An FAD-binding site is contributed by His-372. Lys-375 provides a ligand contact to D-sorbitol. Lys-375 lines the xylitol pocket.

It belongs to the oxygen-dependent FAD-linked oxidoreductase family. In terms of assembly, monomer. It depends on FAD as a cofactor.

The catalysed reaction is an alditol + O2 = an aldose + H2O2. It catalyses the reaction xylitol + O2 = D-xylose + H2O2. It carries out the reaction D-sorbitol + O2 = D-glucose + H2O2. In terms of biological role, oxidase that performs selective oxidation of the terminal primary hydroxyl group of several alditols, with a reduction of O2 to H2O2. Shows highest activity on xylitol and D-sorbitol, and a poor efficiency with D-mannitol and L-threitol. The protein is Alditol oxidase (xyoA) of Streptomyces coelicolor (strain ATCC BAA-471 / A3(2) / M145).